The following is a 249-amino-acid chain: Myelin protein P0 (249 aa).

Residues 1–29 (MALGAIGDGRLLLLLVGLLSASGPSPTLA) form the signal peptide. Residues 30–143 (IHVYTPREVY…DIVGKSSQVT (114 aa)) form the Ig-like V-type domain. Topologically, residues 30–153 (IHVYTPREVY…LYVLEKVPTR (124 aa)) are extracellular. A disulfide bond links Cys50 and Cys127. The N-linked (GlcNAc...) asparagine glycan is linked to Asn122. Residues 154–179 (YGVVLGSIIGGVLLLVALLVAVVYLV) traverse the membrane as a helical segment. Residues 180–249 (RFCWLRRQAV…APGEARKDKK (70 aa)) lie on the Cytoplasmic side of the membrane. Residues 227 to 249 (RSAKAAAEKKSKGAPGEARKDKK) are disordered.

Belongs to the myelin P0 protein family. In terms of tissue distribution, found only in peripheral nervous system Schwann cells.

Its subcellular location is the cell membrane. Is an adhesion molecule necessary for normal myelination in the peripheral nervous system. It mediates adhesion between adjacent myelin wraps and ultimately drives myelin compaction. This chain is Myelin protein P0 (MPZ), found in Gallus gallus (Chicken).